Here is a 754-residue protein sequence, read N- to C-terminus: Nibrin (754 aa).

Residues 24–83 (YVVGRKNCAILIEKDQSISRNHAVLTANFSVTNLSQTDEIPVLALKDNSKYGTFVNEEKM) form the FHA domain. 2 consecutive BRCT domains span residues 105 to 181 (KFRI…TEFL) and 224 to 315 (GKTF…LAVI). The mediates interaction with SP100 stretch occupies residues 111 to 328 (EPLVACSSCL…TKNYCDPQGH (218 aa)). Residues 221 to 402 (IFKGKTFIFL…FRMLSQDAPT (182 aa)) form an interaction with MTOR, MAPKAP1 and RICTOR region. At serine 278 the chain carries Phosphoserine; by ATM. Positions 326-346 (QGHPSTGLKTTTPGPSLSQGL) are disordered. Polar residues predominate over residues 328–346 (HPSTGLKTTTPGPSLSQGL). At threonine 337 the chain carries Phosphothreonine. Serine 343 carries the phosphoserine; by ATM modification. At serine 347 the chain carries Phosphoserine. Position 388 is an N6-lactoyllysine (lysine 388). Disordered stretches follow at residues 396–415 (LSQD…NNNS) and 431–475 (LSPT…NQEM). Serine 397 carries the post-translational modification Phosphoserine. Threonine 402 carries the post-translational modification Phosphothreonine. 2 stretches are compositionally biased toward polar residues: residues 431 to 440 (LSPTKLPSIN) and 447 to 462 (SQQQ…FQPS). At serine 432 the chain carries Phosphoserine. A Glycyl lysine isopeptide (Lys-Gly) (interchain with G-Cter in ubiquitin) cross-link involves residue lysine 435. Positions 461–467 (PSTKKRE) match the Nuclear localization signal motif. 2 positions are modified to phosphoserine: serine 509 and serine 518. Residues lysine 571 and lysine 582 each participate in a glycyl lysine isopeptide (Lys-Gly) (interchain with G-Cter in SUMO2) cross-link. Phosphoserine occurs at positions 615 and 673. Residues lysine 686, lysine 690, and lysine 735 each participate in a glycyl lysine isopeptide (Lys-Gly) (interchain with G-Cter in ubiquitin) cross-link. The FxF/Y motif motif lies at 740–749 (ADDLFRYNPY).

This sequence belongs to the Nibrin family. Component of the MRN complex composed of two heterodimers RAD50 and MRE11 associated with a single NBN. The MRN complexes dimerize on DNA to form joined MRN-MRN oligomers required for DNA double-strand break repair. The MRN complexes dimerize on DNA to form joined MRN-MRN oligomers required for DNA double-strand break repair. As part of the MRN complex, interacts with MCM9; the interaction recruits the complex to DNA repair sites. Component of the BASC complex, at least composed of BRCA1, MSH2, MSH6, MLH1, ATM, BLM, RAD50, MRE11 and NBN. Interacts with histone H2AX; this requires phosphorylation of H2AX on 'Ser-139' and promotes NBN recruitment to DNA damage sites. Interacts with (phosphorylated) MDC1; promoting NBN recruitment to DNA damage sites. Interacts with (phosphorylated) RAD17; promoting NBN recruitment to DNA damage sites. Interacts (via FxF/Y motif) with ATM. Interacts with HJURP. Interacts with INTS3. Interacts with KPNA2. Interacts with TERF2; interaction is disrupted upon NBN phosphorylation by CDK2. Interacts with (phosphorylated) RBBP8/CtIP; the interaction links the role of the MRN complex in DNA double-strand break sensing to resection. Interacts with SP100; recruits NBN to PML bodies. Interacts with ATF2. Interacts with MTOR, MAPKAP1 isoform 2 and RICTOR; indicative for an association with the mTORC2 complex. Interacts with MRNIP. Interacts with UFL1; promoting UFL1 recruitment to double-strand breaks following DNA damage. Interacts with CYREN (via XLF motif). Phosphorylated by ATM in response of ionizing radiation, and such phosphorylation is responsible intra-S phase checkpoint control and telomere maintenance. Phosphorylated at Ser-432 by CDK2 in S/G2 phases abolishes interaction with TERF2, enabling DCLRE1B/Apollo recruitment to telomeres. Phosphorylation at Ser-432 in response to dysfunctional telomeres promotes non-homologous end joining repair at telomeres, while dephosphorylation by PPP1CA promotes microhomology-mediated end-joining (MMEJ) repair. Post-translationally, ubiquitinated at Lys-435 via 'Lys-6'-linked ubiquitin chains by RNF8, promoting NBN recruitment to DNA double-strand breaks (DSBs). Ubiquitinated at Lys-686 and Lys-689 via 'Lys-63'-linked ubiquitin chains by PELI1: ubiquitination takes place following PELI1 phosphorylation and promotes ATM activation and DNA repair. Ubiquitinated at Lys-735 via 'Lys-63'-linked ubiquitin chains by the SCF(SKP2) complex: ubiquitination takes place following SKP2 phosphorylation and promotes ATM activation and DNA repair. In terms of processing, lactylation at Lys-388 by KAT5 in response to DNA damage promotes recruitment of the MRN complex to DNA damage sites. Delactylated by HDAC3.

It localises to the nucleus. It is found in the chromosome. The protein resides in the PML body. The protein localises to the telomere. Component of the MRN complex, which plays a central role in double-strand break (DSB) repair, DNA recombination, maintenance of telomere integrity and meiosis. The MRN complex is involved in the repair of DNA double-strand breaks (DSBs) via homologous recombination (HR), an error-free mechanism which primarily occurs during S and G2 phases. The complex (1) mediates the end resection of damaged DNA, which generates proper single-stranded DNA, a key initial steps in HR, and is (2) required for the recruitment of other repair factors and efficient activation of ATM and ATR upon DNA damage. The MRN complex possesses single-strand endonuclease activity and double-strand-specific 3'-5' exonuclease activity, which are provided by MRE11, to initiate end resection, which is required for single-strand invasion and recombination. Within the MRN complex, NBN acts as a protein-protein adapter, which specifically recognizes and binds phosphorylated proteins, promoting their recruitment to DNA damage sites. Recruits MRE11 and RAD50 components of the MRN complex to DSBs in response to DNA damage. Promotes the recruitment of PI3/PI4-kinase family members ATM, ATR, and probably DNA-PKcs to the DNA damage sites, activating their functions. Mediates the recruitment of phosphorylated RBBP8/CtIP to DSBs, leading to cooperation between the MRN complex and RBBP8/CtIP to initiate end resection. RBBP8/CtIP specifically promotes the endonuclease activity of the MRN complex to clear DNA ends containing protein adducts. The MRN complex is also required for the processing of R-loops. NBN also functions in telomere length maintenance via its interaction with TERF2: interaction with TERF2 during G1 phase preventing recruitment of DCLRE1B/Apollo to telomeres. NBN also promotes DNA repair choice at dysfunctional telomeres: NBN phosphorylation by CK2 promotes non-homologous end joining repair at telomeres, while unphosphorylated NBN promotes microhomology-mediated end-joining (MMEJ) repair. Enhances AKT1 phosphorylation possibly by association with the mTORC2 complex. The protein is Nibrin (NBN) of Pongo abelii (Sumatran orangutan).